Here is a 216-residue protein sequence, read N- to C-terminus: Somatotropin (216 aa).

Positions 1-26 (MAAGPRTSVLLAFGLLCLPWPQDVGA) are cleaved as a signal peptide. Zn(2+) is bound at residue histidine 45. Cysteine 78 and cysteine 189 are oxidised to a cystine. Serine 131 is modified (phosphoserine). Glutamate 198 serves as a coordination point for Zn(2+). A disulfide bond links cysteine 206 and cysteine 214.

It belongs to the somatotropin/prolactin family.

The protein resides in the secreted. In terms of biological role, plays an important role in growth control. Its major role in stimulating body growth is to stimulate the liver and other tissues to secrete IGF1. It stimulates both the differentiation and proliferation of myoblasts. It also stimulates amino acid uptake and protein synthesis in muscle and other tissues. The polypeptide is Somatotropin (GH1) (Equus caballus (Horse)).